The chain runs to 313 residues: Porphobilinogen deaminase (313 aa).

The residue at position 242 (C242) is an S-(dipyrrolylmethanemethyl)cysteine.

The protein belongs to the HMBS family. Monomer. Dipyrromethane is required as a cofactor.

The enzyme catalyses 4 porphobilinogen + H2O = hydroxymethylbilane + 4 NH4(+). It functions in the pathway porphyrin-containing compound metabolism; protoporphyrin-IX biosynthesis; coproporphyrinogen-III from 5-aminolevulinate: step 2/4. Functionally, tetrapolymerization of the monopyrrole PBG into the hydroxymethylbilane pre-uroporphyrinogen in several discrete steps. The protein is Porphobilinogen deaminase of Pseudomonas putida (strain GB-1).